Here is a 70-residue protein sequence, read N- to C-terminus: DNA-directed RNA polymerase subunit epsilon (70 aa).

This sequence belongs to the RNA polymerase subunit epsilon family. As to quaternary structure, RNAP is composed of a core of 2 alpha, a beta and a beta' subunit. The core is associated with a delta subunit, and at least one of epsilon or omega. When a sigma factor is associated with the core the holoenzyme is formed, which can initiate transcription.

It carries out the reaction RNA(n) + a ribonucleoside 5'-triphosphate = RNA(n+1) + diphosphate. In terms of biological role, a non-essential component of RNA polymerase (RNAP). The sequence is that of DNA-directed RNA polymerase subunit epsilon from Limosilactobacillus reuteri (strain DSM 20016) (Lactobacillus reuteri).